The primary structure comprises 187 residues: Intraflagellar transport protein 22 homolog (187 aa).

GTP-binding positions include 10–17, 65–69, and 125–128; these read GPSECGKT, DCAGD, and HKPG.

This sequence belongs to the small GTPase superfamily. Rab family.

The protein is Intraflagellar transport protein 22 homolog (ift22) of Danio rerio (Zebrafish).